The following is a 289-amino-acid chain: 3-methyl-2-oxobutanoate hydroxymethyltransferase (289 aa).

Positions 58 and 99 each coordinate Mg(2+). 3-methyl-2-oxobutanoate is bound by residues 58–59 (DS), Asp99, and Lys128. Glu130 is a binding site for Mg(2+). Glu197 serves as the catalytic Proton acceptor.

Belongs to the PanB family. In terms of assembly, homodecamer; pentamer of dimers. It depends on Mg(2+) as a cofactor.

It is found in the cytoplasm. The catalysed reaction is 3-methyl-2-oxobutanoate + (6R)-5,10-methylene-5,6,7,8-tetrahydrofolate + H2O = 2-dehydropantoate + (6S)-5,6,7,8-tetrahydrofolate. The protein operates within cofactor biosynthesis; (R)-pantothenate biosynthesis; (R)-pantoate from 3-methyl-2-oxobutanoate: step 1/2. Functionally, catalyzes the reversible reaction in which hydroxymethyl group from 5,10-methylenetetrahydrofolate is transferred onto alpha-ketoisovalerate to form ketopantoate. The polypeptide is 3-methyl-2-oxobutanoate hydroxymethyltransferase (Leptothrix cholodnii (strain ATCC 51168 / LMG 8142 / SP-6) (Leptothrix discophora (strain SP-6))).